The sequence spans 148 residues: Ribonuclease H (148 aa).

Positions 1 to 142 constitute an RNase H type-1 domain; sequence MSDSVEMFTD…ADQLANRGVD (142 aa). Positions 10, 48, 70, and 134 each coordinate Mg(2+).

This sequence belongs to the RNase H family. In terms of assembly, monomer. Mg(2+) is required as a cofactor.

The protein resides in the cytoplasm. The enzyme catalyses Endonucleolytic cleavage to 5'-phosphomonoester.. Functionally, endonuclease that specifically degrades the RNA of RNA-DNA hybrids. This Pseudomonas putida (strain ATCC 700007 / DSM 6899 / JCM 31910 / BCRC 17059 / LMG 24140 / F1) protein is Ribonuclease H.